The following is a 485-amino-acid chain: UDP-N-acetylmuramoyl-L-alanyl-D-glutamate--2,6-diaminopimelate ligase (485 aa).

UDP-N-acetyl-alpha-D-muramoyl-L-alanyl-D-glutamate is bound by residues Leu-27 and Ser-29. Residue 106–112 participates in ATP binding; it reads GTSGKTS. UDP-N-acetyl-alpha-D-muramoyl-L-alanyl-D-glutamate is bound by residues 148 to 149, Ser-175, Gln-181, and Arg-183; that span reads TT. Lys-215 is modified (N6-carboxylysine). Meso-2,6-diaminopimelate contacts are provided by residues Arg-382, 406–409, Gly-454, and Glu-458; that span reads DNPR. Residues 406-409 carry the Meso-diaminopimelate recognition motif motif; it reads DNPR.

Belongs to the MurCDEF family. MurE subfamily. Mg(2+) serves as cofactor. Carboxylation is probably crucial for Mg(2+) binding and, consequently, for the gamma-phosphate positioning of ATP.

It is found in the cytoplasm. The catalysed reaction is UDP-N-acetyl-alpha-D-muramoyl-L-alanyl-D-glutamate + meso-2,6-diaminopimelate + ATP = UDP-N-acetyl-alpha-D-muramoyl-L-alanyl-gamma-D-glutamyl-meso-2,6-diaminopimelate + ADP + phosphate + H(+). It participates in cell wall biogenesis; peptidoglycan biosynthesis. Functionally, catalyzes the addition of meso-diaminopimelic acid to the nucleotide precursor UDP-N-acetylmuramoyl-L-alanyl-D-glutamate (UMAG) in the biosynthesis of bacterial cell-wall peptidoglycan. The protein is UDP-N-acetylmuramoyl-L-alanyl-D-glutamate--2,6-diaminopimelate ligase of Bradyrhizobium diazoefficiens (strain JCM 10833 / BCRC 13528 / IAM 13628 / NBRC 14792 / USDA 110).